The following is an 846-amino-acid chain: Translation initiation factor IF-2 (846 aa).

Residues 199 to 219 are disordered; the sequence is KREEEEKKSKAKKAGGKGFKK. The span at 207–219 shows a compositional bias: basic residues; that stretch reads SKAKKAGGKGFKK. The region spanning 345 to 512 is the tr-type G domain; sequence SRAPVVTIMG…AVLLQSEVLE (168 aa). Residues 354-361 form a G1 region; it reads GHVDHGKT. 354-361 is a binding site for GTP; that stretch reads GHVDHGKT. The segment at 379-383 is G2; the sequence is GITQH. The tract at residues 400–403 is G3; sequence DTPG. Residues 400 to 404 and 454 to 457 contribute to the GTP site; these read DTPGH and NKID. The segment at 454–457 is G4; the sequence is NKID. Residues 490-492 are G5; that stretch reads SAK.

It belongs to the TRAFAC class translation factor GTPase superfamily. Classic translation factor GTPase family. IF-2 subfamily.

It is found in the cytoplasm. In terms of biological role, one of the essential components for the initiation of protein synthesis. Protects formylmethionyl-tRNA from spontaneous hydrolysis and promotes its binding to the 30S ribosomal subunits. Also involved in the hydrolysis of GTP during the formation of the 70S ribosomal complex. This chain is Translation initiation factor IF-2, found in Francisella tularensis subsp. holarctica (strain LVS).